Reading from the N-terminus, the 27-residue chain is DPCYEVCLQQHGNVKECEEACKHPVEY.

2 cysteine pairs are disulfide-bonded: Cys-3/Cys-21 and Cys-7/Cys-17.

Belongs to the short scorpion toxin superfamily. Potassium channel inhibitor kappa-KTx family. Kappa-KTx 2 subfamily. In terms of tissue distribution, expressed by the venom gland.

It localises to the secreted. Functionally, omTx1 decreases the amplitude of the potassium current of the rat channels Kv1.1/KCNA1 by 17% and Kv1.2/KCNA2 by 12% as well as human Kv1.3/KCNA3 by 24%. Its function is as follows. OmTx2 decreases the amplitude of the potassium current of the rat channels Kv1.1/KCNA1 by 8% and Kv1.2/KCNA2 by 10% as well as human Kv1.3/KCNA3 by 36%. Also alters glucose-induced insulin release from pancreatic islets. The sequence is that of Potassium channel toxin kappa-KTx 2.2 from Opisthacanthus madagascariensis (Scorpion).